We begin with the raw amino-acid sequence, 33 residues long: Cecropin-B (33 aa).

At lysine 21 the chain carries 5-hydroxylysine.

In terms of assembly, monomer. As to expression, hemolymph.

The protein resides in the secreted. Its function is as follows. Cecropins have lytic and antibacterial activity against several Gram-positive and Gram-negative bacteria. Also has activity against fungi. This is Cecropin-B from Heliothis virescens (Tobacco budworm moth).